The sequence spans 391 residues: 1-deoxy-D-xylulose 5-phosphate reductoisomerase (391 aa).

NADPH contacts are provided by Thr-17, Gly-18, Ser-19, Ile-20, Asn-47, and Asn-130. Lys-131 lines the 1-deoxy-D-xylulose 5-phosphate pocket. An NADPH-binding site is contributed by Glu-132. Asp-156 is a Mn(2+) binding site. The 1-deoxy-D-xylulose 5-phosphate site is built by Ser-157, Glu-158, Ser-182, and His-205. Glu-158 lines the Mn(2+) pocket. Gly-211 contributes to the NADPH binding site. 4 residues coordinate 1-deoxy-D-xylulose 5-phosphate: Ser-218, Asn-223, Lys-224, and Glu-227. Glu-227 is a binding site for Mn(2+).

This sequence belongs to the DXR family. Requires Mg(2+) as cofactor. The cofactor is Mn(2+).

It catalyses the reaction 2-C-methyl-D-erythritol 4-phosphate + NADP(+) = 1-deoxy-D-xylulose 5-phosphate + NADPH + H(+). It functions in the pathway isoprenoid biosynthesis; isopentenyl diphosphate biosynthesis via DXP pathway; isopentenyl diphosphate from 1-deoxy-D-xylulose 5-phosphate: step 1/6. Catalyzes the NADPH-dependent rearrangement and reduction of 1-deoxy-D-xylulose-5-phosphate (DXP) to 2-C-methyl-D-erythritol 4-phosphate (MEP). The sequence is that of 1-deoxy-D-xylulose 5-phosphate reductoisomerase from Sinorhizobium medicae (strain WSM419) (Ensifer medicae).